The chain runs to 440 residues: Serine hydroxymethyltransferase (440 aa).

(6S)-5,6,7,8-tetrahydrofolate is bound by residues leucine 119 and 123–125 (GHL). Lysine 228 bears the N6-(pyridoxal phosphate)lysine mark. Residue 370 to 372 (SPF) participates in (6S)-5,6,7,8-tetrahydrofolate binding.

It belongs to the SHMT family. In terms of assembly, homodimer. The cofactor is pyridoxal 5'-phosphate.

The protein resides in the cytoplasm. It catalyses the reaction (6R)-5,10-methylene-5,6,7,8-tetrahydrofolate + glycine + H2O = (6S)-5,6,7,8-tetrahydrofolate + L-serine. It participates in one-carbon metabolism; tetrahydrofolate interconversion. The protein operates within amino-acid biosynthesis; glycine biosynthesis; glycine from L-serine: step 1/1. Catalyzes the reversible interconversion of serine and glycine with tetrahydrofolate (THF) serving as the one-carbon carrier. This reaction serves as the major source of one-carbon groups required for the biosynthesis of purines, thymidylate, methionine, and other important biomolecules. Also exhibits THF-independent aldolase activity toward beta-hydroxyamino acids, producing glycine and aldehydes, via a retro-aldol mechanism. The chain is Serine hydroxymethyltransferase from Chloroherpeton thalassium (strain ATCC 35110 / GB-78).